The sequence spans 336 residues: Anthranilate phosphoribosyltransferase (336 aa).

Residues glycine 80, 83–84 (GD), threonine 88, 90–93 (NIST), 108–116 (KHGNRSITS), and serine 120 each bind 5-phospho-alpha-D-ribose 1-diphosphate. Residue glycine 80 coordinates anthranilate. Residue serine 92 participates in Mg(2+) binding. Anthranilate is bound at residue asparagine 111. Anthranilate is bound at residue arginine 166. 2 residues coordinate Mg(2+): aspartate 224 and glutamate 225.

The protein belongs to the anthranilate phosphoribosyltransferase family. Homodimer. Mg(2+) serves as cofactor.

The catalysed reaction is N-(5-phospho-beta-D-ribosyl)anthranilate + diphosphate = 5-phospho-alpha-D-ribose 1-diphosphate + anthranilate. The protein operates within amino-acid biosynthesis; L-tryptophan biosynthesis; L-tryptophan from chorismate: step 2/5. Catalyzes the transfer of the phosphoribosyl group of 5-phosphorylribose-1-pyrophosphate (PRPP) to anthranilate to yield N-(5'-phosphoribosyl)-anthranilate (PRA). The polypeptide is Anthranilate phosphoribosyltransferase (Caldicellulosiruptor saccharolyticus (strain ATCC 43494 / DSM 8903 / Tp8T 6331)).